Consider the following 344-residue polypeptide: Anthranilate phosphoribosyltransferase (344 aa).

5-phospho-alpha-D-ribose 1-diphosphate is bound by residues Gly-80, 83–84, Thr-88, 90–93, 108–116, and Ser-120; these read GD, NVST, and KHGNRSVSS. Gly-80 provides a ligand contact to anthranilate. Mg(2+) is bound at residue Ser-92. Residue Asn-111 participates in anthranilate binding. Anthranilate is bound at residue Arg-166. 2 residues coordinate Mg(2+): Asp-225 and Glu-226.

This sequence belongs to the anthranilate phosphoribosyltransferase family. In terms of assembly, homodimer. Mg(2+) is required as a cofactor.

The enzyme catalyses N-(5-phospho-beta-D-ribosyl)anthranilate + diphosphate = 5-phospho-alpha-D-ribose 1-diphosphate + anthranilate. Its pathway is amino-acid biosynthesis; L-tryptophan biosynthesis; L-tryptophan from chorismate: step 2/5. Its function is as follows. Catalyzes the transfer of the phosphoribosyl group of 5-phosphorylribose-1-pyrophosphate (PRPP) to anthranilate to yield N-(5'-phosphoribosyl)-anthranilate (PRA). This is Anthranilate phosphoribosyltransferase from Legionella pneumophila (strain Corby).